A 293-amino-acid polypeptide reads, in one-letter code: Undecaprenyl-diphosphatase (293 aa).

7 helical membrane-spanning segments follow: residues I3–P23, K43–F63, I85–I105, L109–A129, V203–E223, I238–L258, and F269–I289.

This sequence belongs to the UppP family.

The protein resides in the cell inner membrane. It catalyses the reaction di-trans,octa-cis-undecaprenyl diphosphate + H2O = di-trans,octa-cis-undecaprenyl phosphate + phosphate + H(+). In terms of biological role, catalyzes the dephosphorylation of undecaprenyl diphosphate (UPP). Confers resistance to bacitracin. The sequence is that of Undecaprenyl-diphosphatase from Ralstonia pickettii (strain 12J).